Here is a 205-residue protein sequence, read N- to C-terminus: DUF724 domain-containing protein 4 (205 aa).

Positions 28 to 59 (DASGRGKRRRVEQEHHSDLNNETAAPTGGSAG) are disordered. The region spanning 63–189 (VLPFTKTLAS…MADDYSKLKK (127 aa)) is the DUF724 domain.

In terms of tissue distribution, expressed in roots, leaves, stems, flowers and siliques.

It localises to the nucleus. Functionally, may be involved in the polar growth of plant cells via transportation of RNAs. The polypeptide is DUF724 domain-containing protein 4 (Arabidopsis thaliana (Mouse-ear cress)).